The primary structure comprises 544 residues: CTP synthase (544 aa).

Positions Met-1–Leu-267 are amidoligase domain. A CTP-binding site is contributed by Ser-13. Residue Ser-13 coordinates UTP. Ser-14–Ile-19 is a binding site for ATP. Residue Tyr-54 coordinates L-glutamine. Asp-71 is an ATP binding site. Asp-71 and Glu-141 together coordinate Mg(2+). CTP contacts are provided by residues Asp-148–Glu-150, Lys-188–Gln-193, and Lys-224. Residues Lys-188–Gln-193 and Lys-224 contribute to the UTP site. The 243-residue stretch at Glu-292–Gln-534 folds into the Glutamine amidotransferase type-1 domain. Gly-354 contributes to the L-glutamine binding site. Residue Cys-381 is the Nucleophile; for glutamine hydrolysis of the active site. L-glutamine contacts are provided by residues Leu-382–Gln-385, Glu-405, and Arg-462. Catalysis depends on residues His-507 and Glu-509.

Belongs to the CTP synthase family. Homotetramer.

It catalyses the reaction UTP + L-glutamine + ATP + H2O = CTP + L-glutamate + ADP + phosphate + 2 H(+). The enzyme catalyses L-glutamine + H2O = L-glutamate + NH4(+). The catalysed reaction is UTP + NH4(+) + ATP = CTP + ADP + phosphate + 2 H(+). It functions in the pathway pyrimidine metabolism; CTP biosynthesis via de novo pathway; CTP from UDP: step 2/2. Allosterically activated by GTP, when glutamine is the substrate; GTP has no effect on the reaction when ammonia is the substrate. The allosteric effector GTP functions by stabilizing the protein conformation that binds the tetrahedral intermediate(s) formed during glutamine hydrolysis. Inhibited by the product CTP, via allosteric rather than competitive inhibition. Catalyzes the ATP-dependent amination of UTP to CTP with either L-glutamine or ammonia as the source of nitrogen. Regulates intracellular CTP levels through interactions with the four ribonucleotide triphosphates. This Synechococcus sp. (strain JA-2-3B'a(2-13)) (Cyanobacteria bacterium Yellowstone B-Prime) protein is CTP synthase.